The primary structure comprises 475 residues: Ankyrin repeat, SAM and basic leucine zipper domain-containing protein 1 (475 aa).

Residues 1–25 (MAAGPLRGLAVAGGGESSDSEDDGW) are disordered. S17, S18, and S20 each carry phosphoserine. ANK repeat units follow at residues 45–74 (ERQE…SVDT), 78–107 (YGWT…NASF), 110–144 (DKQT…DPNV), 148–177 (RLMT…EVNT), 181–210 (NGYT…NKMI), and 214–243 (DGKT…PLEG). The 63-residue stretch at 272–334 (SYTAFGDLEI…KIMAALKELE (63 aa)) folds into the SAM domain.

Interacts with DDX4, PIWIL1, RANBP9 and TDRD1.

The protein localises to the cytoplasm. Functionally, plays a central role during spermatogenesis by repressing transposable elements and preventing their mobilization, which is essential for the germline integrity. Acts via the piRNA metabolic process, which mediates the repression of transposable elements during meiosis by forming complexes composed of piRNAs and Piwi proteins and governs the methylation and subsequent repression of transposons. Its association with pi-bodies suggests a participation in the primary piRNAs metabolic process. Required prior to the pachytene stage to facilitate the production of multiple types of piRNAs, including those associated with repeats involved in the regulation of retrotransposons. May act by mediating protein-protein interactions during germ cell maturation. The sequence is that of Ankyrin repeat, SAM and basic leucine zipper domain-containing protein 1 (ASZ1) from Bos taurus (Bovine).